A 177-amino-acid polypeptide reads, in one-letter code: ATP synthase subunit delta (177 aa).

The protein belongs to the ATPase delta chain family. As to quaternary structure, F-type ATPases have 2 components, F(1) - the catalytic core - and F(0) - the membrane proton channel. F(1) has five subunits: alpha(3), beta(3), gamma(1), delta(1), epsilon(1). F(0) has three main subunits: a(1), b(2) and c(10-14). The alpha and beta chains form an alternating ring which encloses part of the gamma chain. F(1) is attached to F(0) by a central stalk formed by the gamma and epsilon chains, while a peripheral stalk is formed by the delta and b chains.

It is found in the cell inner membrane. Its function is as follows. F(1)F(0) ATP synthase produces ATP from ADP in the presence of a proton or sodium gradient. F-type ATPases consist of two structural domains, F(1) containing the extramembraneous catalytic core and F(0) containing the membrane proton channel, linked together by a central stalk and a peripheral stalk. During catalysis, ATP synthesis in the catalytic domain of F(1) is coupled via a rotary mechanism of the central stalk subunits to proton translocation. In terms of biological role, this protein is part of the stalk that links CF(0) to CF(1). It either transmits conformational changes from CF(0) to CF(1) or is implicated in proton conduction. This Shewanella halifaxensis (strain HAW-EB4) protein is ATP synthase subunit delta.